Reading from the N-terminus, the 621-residue chain is ATP-dependent lipid A-core flippase (621 aa).

Helical transmembrane passes span 32–52 (IVAA…LAAF), 91–111 (VWGT…LVVI), 192–212 (IVLL…FPLL), 286–306 (SPFS…IALW), and 312–332 (YTTI…YAPI). One can recognise an ABC transmembrane type-1 domain in the interval 33 to 344 (VAALIAIFGV…LANISIPMQT (312 aa)). Residues 378–611 (FRNVDVEYRS…NGYYTMLRNI (234 aa)) form the ABC transporter domain. An ATP-binding site is contributed by 410–417 (GRSGSGKS).

The protein belongs to the ABC transporter superfamily. Lipid exporter (TC 3.A.1.106) family. As to quaternary structure, homodimer.

The protein localises to the cell inner membrane. The catalysed reaction is ATP + H2O + lipid A-core oligosaccharideSide 1 = ADP + phosphate + lipid A-core oligosaccharideSide 2.. Involved in lipopolysaccharide (LPS) biosynthesis. Translocates lipid A-core from the inner to the outer leaflet of the inner membrane. Transmembrane domains (TMD) form a pore in the inner membrane and the ATP-binding domain (NBD) is responsible for energy generation. The polypeptide is ATP-dependent lipid A-core flippase (Neisseria meningitidis serogroup A / serotype 4A (strain DSM 15465 / Z2491)).